A 349-amino-acid polypeptide reads, in one-letter code: S-adenosylmethionine:tRNA ribosyltransferase-isomerase (349 aa).

The protein belongs to the QueA family. As to quaternary structure, monomer.

The protein resides in the cytoplasm. It carries out the reaction 7-aminomethyl-7-carbaguanosine(34) in tRNA + S-adenosyl-L-methionine = epoxyqueuosine(34) in tRNA + adenine + L-methionine + 2 H(+). Its pathway is tRNA modification; tRNA-queuosine biosynthesis. In terms of biological role, transfers and isomerizes the ribose moiety from AdoMet to the 7-aminomethyl group of 7-deazaguanine (preQ1-tRNA) to give epoxyqueuosine (oQ-tRNA). This is S-adenosylmethionine:tRNA ribosyltransferase-isomerase from Ruegeria sp. (strain TM1040) (Silicibacter sp.).